Reading from the N-terminus, the 562-residue chain is Protein KASH5 (562 aa).

At 1 to 521 the chain is on the cytoplasmic side; it reads MDLPEGPVGG…PQRLRVTRHP (521 aa). A disordered region spans residues 125–153; it reads ALTSRQLPSGCPEAEEPANLESFGGEDPR. Residues 164-349 are a coiled coil; it reads SSLEDLELSN…LEEQLSQTYE (186 aa). The disordered stretch occupies residues 407–481; the sequence is ETSEETEFPS…DIPENPPERP (75 aa). The segment covering 431-448 has biased composition (basic and acidic residues); sequence AHPEEGRKEPSMWLTRRE. A helical; Anchor for type IV membrane protein membrane pass occupies residues 522-542; that stretch reads LIPAPVLGLLLLLLLSVLLLG. Residues 541–562 are interaction with SUN1; the sequence is LGPSPPPTWPHLQLCYLQPPPV. Residues 543-562 are Perinuclear space-facing; the sequence is PSPPPTWPHLQLCYLQPPPV.

As to quaternary structure, core component the LINC complex which is composed of inner nuclear membrane SUN domain-containing proteins coupled to outer nuclear membrane KASH domain-containing nesprins. SUN and KASH domain-containing proteins seem to bind each other promiscuously; however, differentially expression of LINC complex constituents is giving rise to specific assemblies. At least SUN1/2-containing core LINC complexes are proposed to be hexameric composed of three protomers of each KASH and SUN domain-containing protein. Interacts with SUN1; this interaction mediates its telomere localization by forming a SUN1:KASH5 LINC complex. Component of a probable SUN2:KASH5 LINC complex. Self-associates. Interacts with DYNC1H1, DCTN1, DYNC1I1/2 and PAFAH1B1; suggesting the association with the dynein-dynactin motor complex. Expressed in testis (at protein level).

The protein localises to the nucleus outer membrane. The protein resides in the nucleus. It is found in the chromosome. It localises to the telomere. Its subcellular location is the nucleus envelope. In terms of biological role, as a component of the LINC (LInker of Nucleoskeleton and Cytoskeleton) complex, involved in the connection between the nuclear lamina and the cytoskeleton. The nucleocytoplasmic interactions established by the LINC complex play an important role in the transmission of mechanical forces across the nuclear envelope and in nuclear movement and positioning. Required for telomere attachment to nuclear envelope in the prophase of meiosis. Required for rapid telomere prophase movements implicating a SUN1/2:KASH5 LINC complex in which SUN1 and SUN2 seem to act at least partial redundantly. Required for homolog pairing during meiotic prophase in spermatocytes and probably oocytes. Essential for male and female gametogenesis. Recruits cytoplasmic dynein to telomere attachment sites at the nuclear envelope in spermatocytes. In oocytes is involved in meiotic resumption and spindle formation. This Homo sapiens (Human) protein is Protein KASH5.